Reading from the N-terminus, the 198-residue chain is Cytokinin riboside 5'-monophosphate phosphoribohydrolase (198 aa).

Substrate-binding positions include Glu-91, 109–110 (RK), 126–132 (GVGTAEE), and Thr-138.

This sequence belongs to the LOG family.

The catalysed reaction is N(6)-(dimethylallyl)adenosine 5'-phosphate + H2O = N(6)-dimethylallyladenine + D-ribose 5-phosphate. It catalyses the reaction 9-ribosyl-trans-zeatin 5'-phosphate + H2O = trans-zeatin + D-ribose 5-phosphate. In terms of biological role, catalyzes the hydrolytic removal of ribose 5'-monophosphate from nitrogen N6-modified adenosines, the final step of bioactive cytokinin synthesis. This chain is Cytokinin riboside 5'-monophosphate phosphoribohydrolase (fas6), found in Rhodococcoides fascians (Rhodococcus fascians).